Here is a 77-residue protein sequence, read N- to C-terminus: Acyl carrier protein (77 aa).

Residues 2–77 (ADTLSRITKI…DVVEYIEGRQ (76 aa)) form the Carrier domain. O-(pantetheine 4'-phosphoryl)serine is present on S37.

The protein belongs to the acyl carrier protein (ACP) family. In terms of processing, 4'-phosphopantetheine is transferred from CoA to a specific serine of apo-ACP by AcpS. This modification is essential for activity because fatty acids are bound in thioester linkage to the sulfhydryl of the prosthetic group.

It is found in the cytoplasm. The protein operates within lipid metabolism; fatty acid biosynthesis. Functionally, carrier of the growing fatty acid chain in fatty acid biosynthesis. This chain is Acyl carrier protein, found in Halalkalibacterium halodurans (strain ATCC BAA-125 / DSM 18197 / FERM 7344 / JCM 9153 / C-125) (Bacillus halodurans).